The chain runs to 288 residues: Hypersensitive-induced response protein-like protein 1 (288 aa).

Gly-2 is lipidated: N-myristoyl glycine.

In terms of biological role, positive regulator of hypersensitive response (HR)-like cell death. May be involved in potassium ion channel regulation. The polypeptide is Hypersensitive-induced response protein-like protein 1 (Oryza sativa subsp. japonica (Rice)).